The chain runs to 959 residues: Isoleucine--tRNA ligase (959 aa).

Residues P60–H70 carry the 'HIGH' region motif. E569 provides a ligand contact to L-isoleucyl-5'-AMP. The short motif at K610–S614 is the 'KMSKS' region element. K613 is a binding site for ATP. The Zn(2+) site is built by C928, C931, C948, and C951.

This sequence belongs to the class-I aminoacyl-tRNA synthetase family. IleS type 1 subfamily. As to quaternary structure, monomer. Zn(2+) serves as cofactor.

It localises to the cytoplasm. It carries out the reaction tRNA(Ile) + L-isoleucine + ATP = L-isoleucyl-tRNA(Ile) + AMP + diphosphate. Its function is as follows. Catalyzes the attachment of isoleucine to tRNA(Ile). As IleRS can inadvertently accommodate and process structurally similar amino acids such as valine, to avoid such errors it has two additional distinct tRNA(Ile)-dependent editing activities. One activity is designated as 'pretransfer' editing and involves the hydrolysis of activated Val-AMP. The other activity is designated 'posttransfer' editing and involves deacylation of mischarged Val-tRNA(Ile). The polypeptide is Isoleucine--tRNA ligase (Gloeothece citriformis (strain PCC 7424) (Cyanothece sp. (strain PCC 7424))).